A 151-amino-acid polypeptide reads, in one-letter code: Small ribosomal subunit protein uS19 (151 aa).

This sequence belongs to the universal ribosomal protein uS19 family.

Its function is as follows. Protein S19 forms a complex with S13 that binds strongly to the 16S ribosomal RNA. This Thermoplasma acidophilum (strain ATCC 25905 / DSM 1728 / JCM 9062 / NBRC 15155 / AMRC-C165) protein is Small ribosomal subunit protein uS19 (rps19).